The sequence spans 84 residues: ATP synthase subunit c (84 aa).

The next 2 membrane-spanning stretches (helical) occupy residues 9 to 29 and 54 to 74; these read IIGASLLLAFAALGTAIGFAI and IVAGLLDAIAMIAVGISLLFI.

Belongs to the ATPase C chain family. As to quaternary structure, F-type ATPases have 2 components, F(1) - the catalytic core - and F(0) - the membrane proton channel. F(1) has five subunits: alpha(3), beta(3), gamma(1), delta(1), epsilon(1). F(0) has three main subunits: a(1), b(2) and c(10-14). The alpha and beta chains form an alternating ring which encloses part of the gamma chain. F(1) is attached to F(0) by a central stalk formed by the gamma and epsilon chains, while a peripheral stalk is formed by the delta and b chains.

The protein resides in the cell inner membrane. F(1)F(0) ATP synthase produces ATP from ADP in the presence of a proton or sodium gradient. F-type ATPases consist of two structural domains, F(1) containing the extramembraneous catalytic core and F(0) containing the membrane proton channel, linked together by a central stalk and a peripheral stalk. During catalysis, ATP synthesis in the catalytic domain of F(1) is coupled via a rotary mechanism of the central stalk subunits to proton translocation. In terms of biological role, key component of the F(0) channel; it plays a direct role in translocation across the membrane. A homomeric c-ring of between 10-14 subunits forms the central stalk rotor element with the F(1) delta and epsilon subunits. The sequence is that of ATP synthase subunit c from Haemophilus ducreyi (strain 35000HP / ATCC 700724).